A 103-amino-acid polypeptide reads, in one-letter code: Conantokin R1-A (103 aa).

The first 21 residues, 1–21, serve as a signal peptide directing secretion; the sequence is MQLYTYLYLLVPLVTFHLILG. A propeptide spanning residues 22 to 79 is cleaved from the precursor; it reads TGTLDHGGALTERRSTDATALKPEPVLQKSAARSTDDNGKDRLTQMKRILKKRGNNPR. Residues 34-83 are disordered; that stretch reads RRSTDATALKPEPVLQKSAARSTDDNGKDRLTQMKRILKKRGNNPRADEE. The segment covering 55–65 has biased composition (basic and acidic residues); the sequence is STDDNGKDRLT. Residues Glu-82, Glu-83, and Glu-89 each carry the 4-carboxyglutamate modification.

Belongs to the conotoxin B superfamily. Ca(2+) serves as cofactor. The cofactor is Mg(2+). As to expression, expressed by the venom duct.

The protein localises to the secreted. Conantokins inhibit N-methyl-D-aspartate (NMDA) receptors. This toxin has the highest potency for the NR2B/GRIN2B subunit (IC(50)=0.11 uM), followed by NR2D/GRIN2D (IC(50)=0.48 uM), NR2A/GRIN2A (IC(50)=2.1 uM), and NR2C/GRIN2C (IC(50)=6.1 uM) subunits when tested on rat receptors. The protein is Conantokin R1-A of Conus rolani (Cone snail).